A 210-amino-acid polypeptide reads, in one-letter code: Putative 3-methyladenine DNA glycosylase (210 aa).

Belongs to the DNA glycosylase MPG family.

This chain is Putative 3-methyladenine DNA glycosylase, found in Corynebacterium glutamicum (strain R).